The primary structure comprises 48 residues: SPbeta prophage-derived uncharacterized protein YotE (48 aa).

This is SPbeta prophage-derived uncharacterized protein YotE (yotE) from Bacillus subtilis (strain 168).